Here is a 431-residue protein sequence, read N- to C-terminus: Histidinol dehydrogenase (431 aa).

NAD(+) contacts are provided by Tyr-124, Gln-187, and Asn-210. Substrate contacts are provided by Ser-236, Gln-258, and His-261. Positions 258 and 261 each coordinate Zn(2+). Residues Glu-325 and His-326 each act as proton acceptor in the active site. Substrate is bound by residues His-326, Asp-359, Glu-413, and His-418. Residue Asp-359 participates in Zn(2+) binding. His-418 contacts Zn(2+).

Belongs to the histidinol dehydrogenase family. Zn(2+) is required as a cofactor.

The enzyme catalyses L-histidinol + 2 NAD(+) + H2O = L-histidine + 2 NADH + 3 H(+). The protein operates within amino-acid biosynthesis; L-histidine biosynthesis; L-histidine from 5-phospho-alpha-D-ribose 1-diphosphate: step 9/9. Its function is as follows. Catalyzes the sequential NAD-dependent oxidations of L-histidinol to L-histidinaldehyde and then to L-histidine. The sequence is that of Histidinol dehydrogenase from Legionella pneumophila (strain Paris).